The chain runs to 228 residues: MKALRAVLLILLLSGQPGSGWAQEDGDADPEPENYNYDDDDDEEEEEETNMIPGSRDRAPLQCYFCQVLHSGESCNQTQSCSSSKPFCITLVSHSGTDKGYLTTYSMWCTDTCQPIIKTVGGTQMTQTCCQSTLCNIPPWQNPQVQNPLGGRADSPLESGTRHPQGGKFSHPQVVKAAHPQSDGANLPKSGKANQPQGSGAGYPSGWTKFGNIALLLSFFTCLWASGA.

An N-terminal signal peptide occupies residues 1-22 (MKALRAVLLILLLSGQPGSGWA). Residues 21–32 (WAQEDGDADPEP) form a disordered region. The tract at residues 24–48 (EDGDADPEPENYNYDDDDDEEEEEE) is important for LPL transport to the lumenal surface of endothelial cells. Residues 24 to 49 (EDGDADPEPENYNYDDDDDEEEEEET) are compositionally biased toward acidic residues. Y35 carries the post-translational modification Sulfotyrosine. Residues 61 to 148 (LQCYFCQVLH…PWQNPQVQNP (88 aa)) enclose the UPAR/Ly6 domain. 5 cysteine pairs are disulfide-bonded: C63/C88, C66/C75, C81/C109, C113/C129, and C130/C135. Residue N76 is glycosylated (N-linked (GlcNAc...) asparagine). The segment at 102 to 108 (LTTYSMW) is important for interaction with LPL. A disordered region spans residues 145-200 (VQNPLGGRADSPLESGTRHPQGGKFSHPQVVKAAHPQSDGANLPKSGKANQPQGSG). A lipid anchor (GPI-anchor amidated glycine) is attached at G198. Residues 199 to 228 (SGAGYPSGWTKFGNIALLLSFFTCLWASGA) constitute a propeptide, removed in mature form.

Mostly monomer, but also homodimer and homooligomer. Interacts with lipoprotein lipase (LPL). Interacts with high affinity with high-density lipoprotein (HDL). Interacts with chylomicrons. Interacts with APOA5. Post-translationally, glycosylation of Asn-76 is critical for cell surface localization. In terms of processing, sulfation of a Tyr in the N-terminal acidic region increases the affinity for LPL. Detected in fat tissue. Detected on the luminal surface of capillary endothelial cells in heart, skeletal muscle and brown adipose tissue (at protein level). Detected in heart and brown adipose tissue. Expressed at lower levels in lung and liver.

It is found in the apical cell membrane. It localises to the basolateral cell membrane. Its subcellular location is the cell membrane. In terms of biological role, mediates the transport of lipoprotein lipase LPL from the basolateral to the apical surface of endothelial cells in capillaries. Anchors LPL on the surface of endothelial cells in the lumen of blood capillaries. Thereby, plays an important role in lipolytic processing of chylomicrons by LPL, triglyceride metabolism and lipid homeostasis. Binds chylomicrons and phospholipid particles that contain APOA5. Binds high-density lipoprotein (HDL) and plays a role in the uptake of lipids from HDL. The chain is Glycosylphosphatidylinositol-anchored high density lipoprotein-binding protein 1 from Mus musculus (Mouse).